The sequence spans 470 residues: Iron-sulfur cluster assembly SufBD family protein ABCI9 (470 aa).

The protein belongs to the iron-sulfur cluster assembly SufBD family.

The sequence is that of Iron-sulfur cluster assembly SufBD family protein ABCI9 (ABCI9) from Arabidopsis thaliana (Mouse-ear cress).